The sequence spans 104 residues: Phosphoribosyl-ATP pyrophosphatase (104 aa).

The protein belongs to the PRA-PH family.

The protein localises to the cytoplasm. The catalysed reaction is 1-(5-phospho-beta-D-ribosyl)-ATP + H2O = 1-(5-phospho-beta-D-ribosyl)-5'-AMP + diphosphate + H(+). It functions in the pathway amino-acid biosynthesis; L-histidine biosynthesis; L-histidine from 5-phospho-alpha-D-ribose 1-diphosphate: step 2/9. The sequence is that of Phosphoribosyl-ATP pyrophosphatase from Rhizobium rhizogenes (strain K84 / ATCC BAA-868) (Agrobacterium radiobacter).